A 338-amino-acid chain; its full sequence is Ketol-acid reductoisomerase (NADP(+)) (338 aa).

The 181-residue stretch at M1–T181 folds into the KARI N-terminal Rossmann domain. NADP(+)-binding positions include Y24–Q27, R47, S50, S52, and D82–Q85. Residue H107 is part of the active site. An NADP(+)-binding site is contributed by G133. The KARI C-terminal knotted domain maps to T182–I327. Positions 190, 194, 226, and 230 each coordinate Mg(2+). Residue S251 participates in substrate binding.

It belongs to the ketol-acid reductoisomerase family. Mg(2+) is required as a cofactor.

The enzyme catalyses (2R)-2,3-dihydroxy-3-methylbutanoate + NADP(+) = (2S)-2-acetolactate + NADPH + H(+). It catalyses the reaction (2R,3R)-2,3-dihydroxy-3-methylpentanoate + NADP(+) = (S)-2-ethyl-2-hydroxy-3-oxobutanoate + NADPH + H(+). It participates in amino-acid biosynthesis; L-isoleucine biosynthesis; L-isoleucine from 2-oxobutanoate: step 2/4. The protein operates within amino-acid biosynthesis; L-valine biosynthesis; L-valine from pyruvate: step 2/4. Its function is as follows. Involved in the biosynthesis of branched-chain amino acids (BCAA). Catalyzes an alkyl-migration followed by a ketol-acid reduction of (S)-2-acetolactate (S2AL) to yield (R)-2,3-dihydroxy-isovalerate. In the isomerase reaction, S2AL is rearranged via a Mg-dependent methyl migration to produce 3-hydroxy-3-methyl-2-ketobutyrate (HMKB). In the reductase reaction, this 2-ketoacid undergoes a metal-dependent reduction by NADPH to yield (R)-2,3-dihydroxy-isovalerate. The sequence is that of Ketol-acid reductoisomerase (NADP(+)) from Psychrobacter sp. (strain PRwf-1).